The following is a 749-amino-acid chain: Probable serine/threonine-protein kinase drkC (749 aa).

A signal peptide spans 1–31; the sequence is MIIINKYIRMNKIAILFSFFILICCTGYSIS. The Extracellular portion of the chain corresponds to 32–423; that stretch reads YKINGINENK…TSPNYQKIIY (392 aa). The interval 124–153 is disordered; sequence DRTDQVSTSSSSSSFSEENKKSSSDDSAPA. Residues 130-139 show a composition bias toward low complexity; the sequence is STSSSSSSFS. N-linked (GlcNAc...) asparagine glycosylation is found at Asn157, Asn189, Asn283, Asn358, Asn373, Asn381, and Asn397. A helical transmembrane segment spans residues 424–444; it reads IVVGVGIAVLLIIAVGIYFII. Over 445–749 the chain is Cytoplasmic; sequence RLRIKNKRLN…QEIVKRLEAM (305 aa). Residues 491-749 form the Protein kinase domain; sequence IVVQNRIGRG…QEIVKRLEAM (259 aa). Residues 497 to 505 and Lys518 each bind ATP; that span reads IGRGSCAEV. Asp615 acts as the Proton acceptor in catalysis.

This sequence belongs to the protein kinase superfamily. TKL Ser/Thr protein kinase family.

Its subcellular location is the membrane. It carries out the reaction L-seryl-[protein] + ATP = O-phospho-L-seryl-[protein] + ADP + H(+). The enzyme catalyses L-threonyl-[protein] + ATP = O-phospho-L-threonyl-[protein] + ADP + H(+). This is Probable serine/threonine-protein kinase drkC (drkC) from Dictyostelium discoideum (Social amoeba).